A 106-amino-acid polypeptide reads, in one-letter code: Large ribosomal subunit protein uL30 (106 aa).

The protein belongs to the universal ribosomal protein uL30 family. Part of the 50S ribosomal subunit.

The sequence is that of Large ribosomal subunit protein uL30 from Ruthia magnifica subsp. Calyptogena magnifica.